Here is a 173-residue protein sequence, read N- to C-terminus: Mesencephalic astrocyte-derived neurotrophic factor homolog (173 aa).

Residues 1-22 form the signal peptide; the sequence is MKTWHMVVVIGFLATLAQTSLA. Intrachain disulfides connect C28–C114, C31–C103, C61–C72, and C148–C151.

This sequence belongs to the ARMET family.

It localises to the secreted. Its function is as follows. Required during the maturation of the embryonic nervous system for maintenance of neuronal and cuticular connectivity. Essential for maintenance of dopaminergic neurons and dopamine levels. In Drosophila sechellia (Fruit fly), this protein is Mesencephalic astrocyte-derived neurotrophic factor homolog.